Here is a 164-residue protein sequence, read N- to C-terminus: SsrA-binding protein (164 aa).

Residues 143 to 164 (HDKRQDEKQKSIKKEINSVLKR) are disordered. Residues 145 to 158 (KRQDEKQKSIKKEI) show a composition bias toward basic and acidic residues.

This sequence belongs to the SmpB family.

It localises to the cytoplasm. Required for rescue of stalled ribosomes mediated by trans-translation. Binds to transfer-messenger RNA (tmRNA), required for stable association of tmRNA with ribosomes. tmRNA and SmpB together mimic tRNA shape, replacing the anticodon stem-loop with SmpB. tmRNA is encoded by the ssrA gene; the 2 termini fold to resemble tRNA(Ala) and it encodes a 'tag peptide', a short internal open reading frame. During trans-translation Ala-aminoacylated tmRNA acts like a tRNA, entering the A-site of stalled ribosomes, displacing the stalled mRNA. The ribosome then switches to translate the ORF on the tmRNA; the nascent peptide is terminated with the 'tag peptide' encoded by the tmRNA and targeted for degradation. The ribosome is freed to recommence translation, which seems to be the essential function of trans-translation. The polypeptide is SsrA-binding protein (Prochlorococcus marinus (strain MIT 9312)).